The chain runs to 138 residues: MSRVVSALMGLVLMFGCAFFSVQPQAQALDLSNGFVSAAVLGERVNPADKVLESEYGKKIDLNNASVRLFRELRGFYPTLAKRIIENAPYDSVEDVLNIPDLSEKQLARLEENLERFTVTPPADVFIDGDQRLNTGDY.

Positions 1-28 (MSRVVSALMGLVLMFGCAFFSVQPQAQA) are cleaved as a signal peptide. The propeptide occupies 29–42 (LDLSNGFVSAAVLG).

It belongs to the PsbU family. As to quaternary structure, PSII is composed of 1 copy each of membrane proteins PsbA, PsbB, PsbC, PsbD, PsbE, PsbF, PsbH, PsbI, PsbJ, PsbK, PsbL, PsbM, PsbT, PsbX, PsbY, PsbZ, Psb30/Ycf12, peripheral proteins PsbO, CyanoQ (PsbQ), PsbU, PsbV and a large number of cofactors. It forms dimeric complexes.

Its subcellular location is the cellular thylakoid membrane. Functionally, one of the extrinsic, lumenal subunits of photosystem II (PSII). PSII is a light-driven water plastoquinone oxidoreductase, using light energy to abstract electrons from H(2)O, generating a proton gradient subsequently used for ATP formation. The extrinsic proteins stabilize the structure of photosystem II oxygen-evolving complex (OEC), the ion environment of oxygen evolution and protect the OEC against heat-induced inactivation. In Picosynechococcus sp. (strain ATCC 27264 / PCC 7002 / PR-6) (Agmenellum quadruplicatum), this protein is Photosystem II extrinsic protein U.